We begin with the raw amino-acid sequence, 1202 residues long: Putative late blight resistance protein homolog R1B-8 (1202 aa).

Coiled-coil stretches lie at residues 345–368 (RYSD…ESLQ) and 437–459 (LRMN…RLLN). Positions 426-741 (IARTSSQLAR…ISESFIKSCE (316 aa)) constitute an NB-ARC domain. ATP is bound at residue 471–478 (GMPGLGKT). LRR repeat units lie at residues 865–889 (FKFL…LFYL), 908–936 (LWNL…VWDM), 1011–1036 (PIRL…ISAP), 1040–1059 (YLKL…TADH), 1060–1084 (LKHL…VSNG), 1086–1111 (FPQL…VFPN), and 1128–1151 (SCFM…VVQS).

The protein belongs to the disease resistance NB-LRR family.

The protein resides in the cytoplasm. It localises to the membrane. Confers resistance to late blight (Phytophthora infestans) races carrying the avirulence gene Avr1. Resistance proteins guard the plant against pathogens that contain an appropriate avirulence protein via an indirect interaction with this avirulence protein. That triggers a defense system including the hypersensitive response, which restricts the pathogen growth. This is Putative late blight resistance protein homolog R1B-8 (R1B-8) from Solanum demissum (Wild potato).